Reading from the N-terminus, the 537-residue chain is Pancreatic secretory granule membrane major glycoprotein GP2 (537 aa).

The signal sequence occupies residues 1-28; it reads MPHLMERMVGSGLLWLALVSCILTQASA. The beta hairpin stretch occupies residues 41–60; sequence SYGLDLDCGAPGTPEAHVCF. 11 disulfide bridges follow: Cys48–Cys59, Cys63–Cys157, Cys85–Cys172, Cys107–Cys145, Cys113–Cys177, Cys138–Cys146, Cys190–Cys200, Cys194–Cys209, Cys211–Cys241, Cys229–Cys320, and Cys261–Cys284. The tract at residues 61–81 is D10C; sequence DPCQNYTLLDEPFRSTENSAG. N-linked (GlcNAc...) (high mannose) asparagine glycosylation occurs at Asn65. Residues Asn88, Asn122, and Asn134 are each glycosylated (N-linked (GlcNAc...) asparagine). One can recognise an EGF-like domain in the interval 186-230; sequence VEDKCEKACRPEEECLALNSTWGCFCRQDLNSSDVHSLQPQLDCG. N-linked (GlcNAc...) asparagine glycans are attached at residues Asn204, Asn216, and Asn260. The tract at residues 228-321 is ZP-N; the sequence is DCGPREIKVK…TILNINFQCA (94 aa). Positions 228–484 constitute a ZP domain; the sequence is DCGPREIKVK…PSCSRSQVRS (257 aa). Asn291 and Asn342 each carry an N-linked (GlcNAc...) asparagine glycan. The flexible ZP-N/ZP-C linker stretch occupies residues 322–345; sequence YPLDMKVSLQAALQPIVSSLNVSV. The tract at residues 346–357 is internal hydrophobic patch (IHP); the sequence is DGNGEFIVRMAL. Residues 346-484 form a ZP-C region; the sequence is DGNGEFIVRM…PSCSRSQVRS (139 aa). A glycan (N-linked (GlcNAc...) asparagine) is linked at Asn362. 3 disulfide bridges follow: Cys401-Cys461, Cys422-Cys477, and Cys466-Cys473. Positions 491–499 are external hydrophobic patch (EHP); sequence LARVLDLGP. Asn512 is lipidated: GPI-anchor amidated asparagine. The propeptide at 513–537 is removed in mature form; sequence GTPSTAGFLVAWPMVLLTVLLAWLF.

In terms of assembly, interacts with SYCN. Interacts with bacterial adhesin fimH. Post-translationally, N-glycosylated. Glycosylated Asn-65 may be required for interaction with bacterial adhesin fimH. In terms of tissue distribution, expressed in pancreas (at protein level). Specifically expressed by M (microfold) cells which are atypical epithelial cells of the intestine (at protein level).

It localises to the zymogen granule membrane. The protein resides in the secreted. The protein localises to the cell membrane. Its subcellular location is the apical cell membrane. It is found in the membrane raft. It localises to the endosome. Functions as an intestinal M-cell transcytotic receptor specific for type-I-piliated bacteria that participates in the mucosal immune response toward these bacteria. At the apical membrane of M-cells it binds fimH, a protein of the bacteria type I pilus tip. Internalizes bound bacteria, like E.coli and S.typhimurium, from the lumen of the intestine and delivers them, through M-cells, to the underlying organized lymphoid follicles where they are captured by antigen-presenting dendritic cells to elicit a mucosal immune response. The protein is Pancreatic secretory granule membrane major glycoprotein GP2 of Homo sapiens (Human).